Consider the following 341-residue polypeptide: Phosphate acyltransferase (341 aa).

The protein belongs to the PlsX family. As to quaternary structure, homodimer. Probably interacts with PlsY.

It is found in the cytoplasm. It carries out the reaction a fatty acyl-[ACP] + phosphate = an acyl phosphate + holo-[ACP]. Its pathway is lipid metabolism; phospholipid metabolism. Catalyzes the reversible formation of acyl-phosphate (acyl-PO(4)) from acyl-[acyl-carrier-protein] (acyl-ACP). This enzyme utilizes acyl-ACP as fatty acyl donor, but not acyl-CoA. This is Phosphate acyltransferase from Vibrio atlanticus (strain LGP32) (Vibrio splendidus (strain Mel32)).